The following is a 280-amino-acid chain: L-aspartate dehydrogenase (280 aa).

NAD(+) is bound by residues Ala-134 and Asn-202. The active site involves His-232.

This sequence belongs to the L-aspartate dehydrogenase family.

It carries out the reaction L-aspartate + NADP(+) + H2O = oxaloacetate + NH4(+) + NADPH + H(+). The enzyme catalyses L-aspartate + NAD(+) + H2O = oxaloacetate + NH4(+) + NADH + H(+). It functions in the pathway cofactor biosynthesis; NAD(+) biosynthesis; iminoaspartate from L-aspartate (dehydrogenase route): step 1/1. Its function is as follows. Specifically catalyzes the NAD or NADP-dependent dehydrogenation of L-aspartate to iminoaspartate. This chain is L-aspartate dehydrogenase, found in Bradyrhizobium diazoefficiens (strain JCM 10833 / BCRC 13528 / IAM 13628 / NBRC 14792 / USDA 110).